A 251-amino-acid polypeptide reads, in one-letter code: GTP cyclohydrolase FolE2 (251 aa).

It belongs to the GTP cyclohydrolase IV family.

It carries out the reaction GTP + H2O = 7,8-dihydroneopterin 3'-triphosphate + formate + H(+). The protein operates within cofactor biosynthesis; 7,8-dihydroneopterin triphosphate biosynthesis; 7,8-dihydroneopterin triphosphate from GTP: step 1/1. Functionally, converts GTP to 7,8-dihydroneopterin triphosphate. This is GTP cyclohydrolase FolE2 from Desulfotalea psychrophila (strain LSv54 / DSM 12343).